The following is a 596-amino-acid chain: Pheromone-processing carboxypeptidase KEX1 (596 aa).

The first 17 residues, 1-17 (MLGLATTVTLESSGCSS), serve as a signal peptide directing secretion. Residues 18-486 (KMCFRLLCSV…KIAAWEAYYK (469 aa)) lie on the Lumenal side of the membrane. N-linked (GlcNAc...) asparagine glycans are attached at residues N54 and N90. S154 is a catalytic residue. 6 N-linked (GlcNAc...) asparagine glycosylation sites follow: N177, N367, N372, N404, N412, and N464. The tract at residues 447–469 (SRIDGLKGAPTSVGAHPNSTTAE) is disordered. The chain crosses the membrane as a helical span at residues 487–507 (SGEVALVVVAIAASLWGFFIW). Residues 508–596 (RSKRREKGLE…QSHAGMGKSR (89 aa)) lie on the Cytoplasmic side of the membrane. A disordered region spans residues 539 to 596 (KRRGRMDVESAPRPDEAELETLYNAAEGSDPQDGEENFSDGKGDNEKAQSHAGMGKSR). Basic and acidic residues-rich tracts occupy residues 543 to 554 (RMDVESAPRPDE) and 577 to 587 (SDGKGDNEKAQ).

This sequence belongs to the peptidase S10 family.

The protein resides in the golgi apparatus. The protein localises to the trans-Golgi network membrane. The catalysed reaction is Preferential release of a C-terminal arginine or lysine residue.. Protease with a carboxypeptidase B-like function involved in the C-terminal processing of the lysine and arginine residues from protein precursors. Promotes cell fusion and is involved in the programmed cell death. The chain is Pheromone-processing carboxypeptidase KEX1 (KEX1) from Arthroderma benhamiae (strain ATCC MYA-4681 / CBS 112371) (Trichophyton mentagrophytes).